The primary structure comprises 79 residues: Acyl carrier protein (79 aa).

In terms of domain architecture, Carrier spans 2–77; sequence ADFEARVKEI…SAIDYVKTHV (76 aa). An O-(pantetheine 4'-phosphoryl)serine modification is found at Ser-37.

It belongs to the acyl carrier protein (ACP) family. In terms of processing, 4'-phosphopantetheine is transferred from CoA to a specific serine of apo-ACP by AcpS. This modification is essential for activity because fatty acids are bound in thioester linkage to the sulfhydryl of the prosthetic group.

The protein localises to the cytoplasm. The protein operates within lipid metabolism; fatty acid biosynthesis. Its function is as follows. Carrier of the growing fatty acid chain in fatty acid biosynthesis. This is Acyl carrier protein from Endomicrobium trichonymphae.